The primary structure comprises 215 residues: Probable transaldolase (215 aa).

Residue K83 is the Schiff-base intermediate with substrate of the active site.

Belongs to the transaldolase family. Type 3B subfamily.

It is found in the cytoplasm. The enzyme catalyses D-sedoheptulose 7-phosphate + D-glyceraldehyde 3-phosphate = D-erythrose 4-phosphate + beta-D-fructose 6-phosphate. It participates in carbohydrate degradation; pentose phosphate pathway; D-glyceraldehyde 3-phosphate and beta-D-fructose 6-phosphate from D-ribose 5-phosphate and D-xylulose 5-phosphate (non-oxidative stage): step 2/3. In terms of biological role, transaldolase is important for the balance of metabolites in the pentose-phosphate pathway. The chain is Probable transaldolase from Methanococcus maripaludis (strain C5 / ATCC BAA-1333).